The primary structure comprises 807 residues: MMDSPFLELWQSKAVSIREQLGLGDRPNDSYCYNSAKNSTVLQGVTFGGIPTVLLIDVSCFLFLILVFSIIRRRFWDYGRIALVSEADSESRFQRLSSTSSSGQQDFENELGCCPWLTAIFRLHDDQILEWCGEDAIHYLSFQRHIIFLLVVVSFLSLCVILPVNLSGDLLDKDPYSFGRTTIANLQTDNDLLWLHTIFAVIYLFLTVGFMRHHTQSIKYKEENLVRRTLFITGLPRDARKETVESHFRDAYPTCEVVDVQLCYNVAKLIYLCKEKKKTEKSLTYYTNLQVKTGQRTLINPKPCGQFCCCEVLGCEWEDAISYYTRMKDRLLERITEEERHVQDQPLGMAFVTFQEKSMATYILKDFNACKCQSLQCKGEPQPSSHSRELYTSKWTVTFAADPEDICWKNLSIQGLRWWLQWLGINFTLFLGLFFLTTPSIILSTMDKFNVTKPIHALNNPIISQFFPTLLLWSFSALLPSIVYYSTLLESHWTKSGENQIMMTKVYIFLIFMVLILPSLGLTSLDFFFRWLFDKTSSEASIRLECVFLPDQGAFFVNYVIASAFIGNGMELLRLPGLILYTFRMIMAKTAADRRNVKQNQAFQYEFGAMYAWMLCVFTVIVAYSITCPIIAPFGLIYILLKHMVDRHNLYFVYLPAKLEKGIHFAAVNQALAAPILCLFWLYFFSFLRLGMKAPATLFTFLVLLLTILVCLAHTCFGCFKHLSPLNYKTEEPASDKGSEAEAHMPPPFTPYVPRILNGLASERTALSPQQQQQQTYGAIHNISGTIPGQCLAQSATGSVAAAPQEA.

Topologically, residues Met-1–Pro-51 are extracellular. Asn-38 carries N-linked (GlcNAc...) asparagine glycosylation. Residues Thr-52 to Arg-74 form a helical membrane-spanning segment. Over Phe-75–Glu-134 the chain is Cytoplasmic. The chain crosses the membrane as a helical span at residues Asp-135–Ser-167. Residues Gly-168–Asp-191 lie on the Extracellular side of the membrane. Residues Leu-192–Ser-217 traverse the membrane as a helical segment. Residues Ile-218–Leu-416 lie on the Cytoplasmic side of the membrane. The interval Lys-219–Gln-414 is intracellular linker IL2; confers mechanosensitivity. The chain crosses the membrane as a helical span at residues Arg-417–Ser-444. Topologically, residues Thr-445–Ile-462 are extracellular. Asn-450 is a glycosylation site (N-linked (GlcNAc...) asparagine). Residues Ile-463–Glu-490 form a helical membrane-spanning segment. Topologically, residues Ser-491–Lys-495 are cytoplasmic. Residues Ser-496–Leu-532 form a helical membrane-spanning segment. Topologically, residues Phe-533–Ala-554 are extracellular. Residues Phe-555–Ile-586 form a helical membrane-spanning segment. The segment at Phe-555–Ile-586 is gating helix. Residues Met-587–Glu-606 are Cytoplasmic-facing. A helical membrane pass occupies residues Phe-607–Tyr-624. The Extracellular portion of the chain corresponds to Ser-625–Cys-628. Residues Pro-629–Tyr-651 traverse the membrane as a helical segment. Residues Phe-652–Lys-661 are Cytoplasmic-facing. Residues Gly-662–Arg-689 traverse the membrane as a helical segment. At Leu-690–Ala-694 the chain is on the extracellular side. Residues Pro-695–Leu-709 form a helical membrane-spanning segment. Topologically, residues Val-710–Ala-807 are cytoplasmic. A Phosphoserine modification is found at Ser-739.

It belongs to the CSC1 (TC 1.A.17) family. As to quaternary structure, monomer. N-Glycosylated.

Its subcellular location is the lysosome membrane. The protein localises to the early endosome membrane. The protein resides in the cell membrane. The catalysed reaction is Ca(2+)(in) = Ca(2+)(out). Mechanosensitive cation channel with low conductance and high activation threshold. In contrast to TMEM63B, does not show phospholipid scramblase activity. Acts as a regulator of lysosomal morphology by mediating lysosomal mechanosensitivity. Important for the baby's first breath and respiration throughout life. Upon lung inflation conducts cation currents in alveolar type 1 and 2 cells triggering lamellar body exocytosis and surfactant secretion into airspace. Also acts as an osmosensitive cation channel preferentially activated by hypotonic stress. The polypeptide is Mechanosensitive cation channel TMEM63A (Homo sapiens (Human)).